The chain runs to 1848 residues: Unconventional myosin-Vb (1848 aa).

Met1 carries the post-translational modification N-acetylmethionine. The 53-residue stretch at 8–60 (SQCTRVWIPDPDEVWRSAELTKDYKEGDKSLQLRLEDETILEYPIDVQRNQLP) folds into the Myosin N-terminal SH3-like domain. A requires for interaction with LIMA1 region spans residues 21 to 40 (VWRSAELTKDYKEGDKSLQL). In terms of domain architecture, Myosin motor spans 69–761 (VGENDLTALS…QVAYLEKLRA (693 aa)). 163-170 (GESGAGKT) is a binding site for ATP. Residues 596 to 630 (KDPVPATTPGKGSSSKISVRSARPPMKVSNKEHKK) form a disordered region. Positions 640 to 662 (LHLLMETLNATTPHYVRCIKPND) are actin-binding. IQ domains are found at residues 769-798 (IMIQKTVRGWLQKVKYHRLKGATLTLQRYC), 792-821 (LTLQRYCRGHLARRLAEHLRRIRAAVVLQK), 817-848 (VVLQKHYRMQRARQAYQRVRRAAVVIQAFTRA), 840-869 (VVIQAFTRAMFVRRTYRQVLMEHKATTIQK), 865-896 (TTIQKHVRGWMARRHFQRLRDAAIVIQCAFRM), and 888-917 (IVIQCAFRMLKARRELKALRIEARSAEHLK). 2 coiled-coil regions span residues 899–1266 (ARRE…ILRT) and 1341–1471 (RLLE…GMLE). Disordered regions lie at residues 1093–1123 (QTPGHRRNPSNQSSLESDSNYPSISTSEIGD) and 1166–1192 (QLEKREQQDSKKVQAEPPQTDIDLDPN). The segment covering 1101-1121 (PSNQSSLESDSNYPSISTSEI) has biased composition (polar residues). Basic and acidic residues predominate over residues 1166-1179 (QLEKREQQDSKKVQ). Ser1446 carries the phosphoserine modification. Residues 1526 to 1803 (TSTINGIKKV…IRTIQAQLQE (278 aa)) form the Dilute domain.

It belongs to the TRAFAC class myosin-kinesin ATPase superfamily. Myosin family. As to quaternary structure, component of the CART complex, at least composed of ACTN4, HGS/HRS, MYO5B and TRIM3. Interacts with RAB11FIP2, RAB11A, and RAB8A. Found in a complex with CFTR and RAB11A. Interacts with NPC1L1;. Interacts with LIMA1.

The protein localises to the cytoplasm. Functionally, may be involved in vesicular trafficking via its association with the CART complex. The CART complex is necessary for efficient transferrin receptor recycling but not for EGFR degradation. Required in a complex with RAB11A and RAB11FIP2 for the transport of NPC1L1 to the plasma membrane. Together with RAB11A participates in CFTR trafficking to the plasma membrane and TF (transferrin) recycling in nonpolarized cells. Together with RAB11A and RAB8A participates in epithelial cell polarization. Together with RAB25 regulates transcytosis. Required for proper localization of bile salt export pump ABCB11 at the apical/canalicular plasma membrane of hepatocytes. The protein is Unconventional myosin-Vb (MYO5B) of Homo sapiens (Human).